Consider the following 301-residue polypeptide: Glycine--tRNA ligase alpha subunit (301 aa).

The protein belongs to the class-II aminoacyl-tRNA synthetase family. In terms of assembly, tetramer of two alpha and two beta subunits.

Its subcellular location is the cytoplasm. The catalysed reaction is tRNA(Gly) + glycine + ATP = glycyl-tRNA(Gly) + AMP + diphosphate. This Polaromonas sp. (strain JS666 / ATCC BAA-500) protein is Glycine--tRNA ligase alpha subunit.